A 310-amino-acid polypeptide reads, in one-letter code: Homeobox protein knotted-1-like 2 (310 aa).

A disordered region spans residues 178–208 (SDDGAVSSDEELREDDDIAADDSQQRSNDRD). Residues 185 to 197 (SDEELREDDDIAA) are compositionally biased toward acidic residues. Residues 208–228 (DLKDQLLRKFGSHISSLKLEF) form the ELK domain. Positions 229-292 (SKKKKKGKLP…NQRKRHWKPS (64 aa)) form a DNA-binding region, homeobox; TALE-type.

It belongs to the TALE/KNOX homeobox family. May form heterodimeric complex with the TALE/BELL protein BEL1, BLH1 and BLH2. Interacts with OFP12 and OFP14. Interacts with BZIP30. As to expression, expressed predominantly in shoot apices of seedlings, in the receptacle and developing pistil of flowers and in axillary buds of inflorescence stems.

It localises to the nucleus. In terms of biological role, may play a role in meristem function, and may be involved in maintaining cells in an undifferentiated, meristematic state. Probably binds to the DNA sequence 5'-TGAC-3'. In Arabidopsis thaliana (Mouse-ear cress), this protein is Homeobox protein knotted-1-like 2 (KNAT2).